The chain runs to 213 residues: MKDKQFAIPKATAKRLSLYYRIFKRFHAEKIERANSKQIAEAIGIDSATVRRDFSYFGELGRRGFGYDVKKLMTFFADLLNDNSITNVMLVGIGNMGHALLHYRFHERNKMKIIMAFDLDDHPEVGTQTPDGIPIYGISQIKDKIKDADVKTAILTVPSVKSQEVANLLVDAGVKGILSFSPVHLHLPKDVVVQYVDLTSELQTLLYFMRKED.

A DNA-binding region (H-T-H motif) is located at residues 18–57; the sequence is LYYRIFKRFHAEKIERANSKQIAEAIGIDSATVRRDFSYF. An NAD(+)-binding site is contributed by 92–97; that stretch reads GIGNMG.

Belongs to the transcriptional regulatory Rex family. As to quaternary structure, homodimer.

It is found in the cytoplasm. In terms of biological role, modulates transcription in response to changes in cellular NADH/NAD(+) redox state. Binds to the promoter of the aldehyde-alcohol dehydrogenase adhE gene. Functions as a redox-dependent repressor of adhE expression. The sequence is that of Redox-sensing transcriptional repressor Rex from Streptococcus pneumoniae serotype 19F (strain G54).